We begin with the raw amino-acid sequence, 72 residues long: Small ribosomal subunit protein bS18 (72 aa).

The protein belongs to the bacterial ribosomal protein bS18 family. In terms of assembly, part of the 30S ribosomal subunit. Forms a tight heterodimer with protein bS6.

In terms of biological role, binds as a heterodimer with protein bS6 to the central domain of the 16S rRNA, where it helps stabilize the platform of the 30S subunit. This Francisella tularensis subsp. holarctica (strain FTNF002-00 / FTA) protein is Small ribosomal subunit protein bS18.